The following is a 202-amino-acid chain: uncharacterized protein (202 aa).

It is found in the mitochondrion. This is an uncharacterized protein from Schizosaccharomyces pombe (strain 972 / ATCC 24843) (Fission yeast).